The primary structure comprises 304 residues: Dihydroorotate dehydrogenase B (NAD(+)), catalytic subunit (304 aa).

Residues Ser21 and 45-46 each bind FMN; that span reads KA. Substrate is bound by residues Lys45 and 69–73; that span reads NAIGL. The FMN site is built by Asn99 and Asn127. Asn127 contacts substrate. Cys130 functions as the Nucleophile in the catalytic mechanism. FMN contacts are provided by Lys165 and Ile191. Residue 192–193 coordinates substrate; it reads NT. Residues Gly217, 243–244, and 265–266 contribute to the FMN site; these read GG and GT.

The protein belongs to the dihydroorotate dehydrogenase family. Type 1 subfamily. As to quaternary structure, heterotetramer of 2 PyrK and 2 PyrD type B subunits. FMN is required as a cofactor.

The protein localises to the cytoplasm. The catalysed reaction is (S)-dihydroorotate + NAD(+) = orotate + NADH + H(+). It functions in the pathway pyrimidine metabolism; UMP biosynthesis via de novo pathway; orotate from (S)-dihydroorotate (NAD(+) route): step 1/1. Its function is as follows. Catalyzes the conversion of dihydroorotate to orotate with NAD(+) as electron acceptor. The chain is Dihydroorotate dehydrogenase B (NAD(+)), catalytic subunit (pyrD) from Listeria welshimeri serovar 6b (strain ATCC 35897 / DSM 20650 / CCUG 15529 / CIP 8149 / NCTC 11857 / SLCC 5334 / V8).